A 107-amino-acid chain; its full sequence is Cytochrome c-550 (107 aa).

Heme c-binding residues include Cys-11, Cys-14, His-15, and Met-80.

Binds 1 heme c group covalently per subunit.

This Ancylobacter novellus (Thiobacillus novellus) protein is Cytochrome c-550.